The chain runs to 98 residues: NADH-ubiquinone oxidoreductase chain 4L (98 aa).

3 helical membrane passes run 1-21, 30-50, and 61-81; these read MSMVYANIFLAFIMSLMGLLV, LLCLEGMMLSLFVMMTVTILI, and IILLVFAACEAALGLSLLVMV.

The protein belongs to the complex I subunit 4L family. As to quaternary structure, core subunit of respiratory chain NADH dehydrogenase (Complex I) which is composed of 45 different subunits.

Its subcellular location is the mitochondrion inner membrane. The enzyme catalyses a ubiquinone + NADH + 5 H(+)(in) = a ubiquinol + NAD(+) + 4 H(+)(out). In terms of biological role, core subunit of the mitochondrial membrane respiratory chain NADH dehydrogenase (Complex I) which catalyzes electron transfer from NADH through the respiratory chain, using ubiquinone as an electron acceptor. Part of the enzyme membrane arm which is embedded in the lipid bilayer and involved in proton translocation. The polypeptide is NADH-ubiquinone oxidoreductase chain 4L (MT-ND4L) (Pagophilus groenlandicus (Harp seal)).